We begin with the raw amino-acid sequence, 393 residues long: Cytochrome b (393 aa).

Topologically, residues 1-33 are mitochondrial matrix; sequence MTIRNQRFSLLKQPISSTLNQHLVDYPTPSNLS. A helical transmembrane segment spans residues 34 to 57; sequence YWWGFGSLAGICLVIQIVTGVFLA. Topologically, residues 58–80 are mitochondrial intermembrane; sequence MHYTPHVDLAFNSVEHIMRDVEG. A helical membrane pass occupies residues 81–108; it reads GWLLRYMHANGASMFFIVVYLHIFRGLY. 2 residues coordinate heme b: His88 and His102. Over 109–116 the chain is Mitochondrial matrix; it reads YASYSSPR. The helical transmembrane segment at 117–141 threads the bilayer; sequence EFVWCLGVVIFLLMIVTAFIGYVLP. The Mitochondrial intermembrane portion of the chain corresponds to 142 to 178; that stretch reads WGQMSFWGATVITSLASAIPVVGDTIVTWLWGGFSVD. Residues 179-210 traverse the membrane as a helical segment; it reads NATLNRFFSLHYLLPFILVGASLLHLAALHQY. Heme b contacts are provided by His189 and His203. His208 contacts a ubiquinone. The Mitochondrial matrix portion of the chain corresponds to 211–229; sequence GSNNPLGVHSEMDKIAFYP. A helical membrane pass occupies residues 230 to 252; it reads YFYVKDLVGWVAFAIFFSIWIFY. The Mitochondrial intermembrane portion of the chain corresponds to 253–293; it reads APNVLGHPDNYIPANPMSTPPHIVPEWYFLPIYAILRSIPD. Residues 294–314 form a helical membrane-spanning segment; that stretch reads KAGGVAAIALVFICLLALPFF. At 315–325 the chain is on the mitochondrial matrix side; sequence KSMYVRSSSFR. The chain crosses the membrane as a helical span at residues 326–346; the sequence is PIYQGMFWLLLADCLLLGWIG. At 347 to 353 the chain is on the mitochondrial intermembrane side; that stretch reads CQPVEAP. A helical membrane pass occupies residues 354–370; the sequence is FVTIGQISSLVFFLFFA. Residues 371-393 lie on the Mitochondrial matrix side of the membrane; the sequence is ITPILGRVGRGIPNSYTDETDHT.

Belongs to the cytochrome b family. As to quaternary structure, component of the ubiquinol-cytochrome c oxidoreductase (cytochrome b-c1 complex, complex III, CIII), a multisubunit enzyme composed of 10 subunits. The complex is composed of 3 respiratory subunits cytochrome b (MT-CYB), cytochrome c1 (CYC1-1 or CYC1-2) and Rieske protein (UCR1-1 or UCR1-2), 2 core protein subunits MPPalpha1 (or MPPalpha2) and MPPB, and 5 low-molecular weight protein subunits QCR7-1 (or QCR7-2), UCRQ-1 (or UCRQ-2), QCR9, UCRY and probably QCR6-1 (or QCR6-2). The complex exists as an obligatory dimer and forms supercomplexes (SCs) in the inner mitochondrial membrane with NADH-ubiquinone oxidoreductase (complex I, CI), resulting in different assemblies (supercomplexes SCI(1)III(2) and SCI(2)III(4)). It depends on heme b as a cofactor.

Its subcellular location is the mitochondrion inner membrane. Its function is as follows. Component of the ubiquinol-cytochrome c oxidoreductase, a multisubunit transmembrane complex that is part of the mitochondrial electron transport chain which drives oxidative phosphorylation. The respiratory chain contains 3 multisubunit complexes succinate dehydrogenase (complex II, CII), ubiquinol-cytochrome c oxidoreductase (cytochrome b-c1 complex, complex III, CIII) and cytochrome c oxidase (complex IV, CIV), that cooperate to transfer electrons derived from NADH and succinate to molecular oxygen, creating an electrochemical gradient over the inner membrane that drives transmembrane transport and the ATP synthase. The cytochrome b-c1 complex catalyzes electron transfer from ubiquinol to cytochrome c, linking this redox reaction to translocation of protons across the mitochondrial inner membrane, with protons being carried across the membrane as hydrogens on the quinol. In the process called Q cycle, 2 protons are consumed from the matrix, 4 protons are released into the intermembrane space and 2 electrons are passed to cytochrome c. Cytochrome b is a catalytic core subunit containing 2 b-type hemes BL and BH topographically segregated in the quinone reduction (Qi) and quinol oxidation (Q0) sites on opposite sides of the membrane. In Arabidopsis thaliana (Mouse-ear cress), this protein is Cytochrome b (MT-CYB).